We begin with the raw amino-acid sequence, 278 residues long: Probable F-box protein At1g14315 (278 aa).

The F-box domain occupies 1-43 (MQLLPHDTVEDILERVPVKSLLRFKSACKQWKLTIESQYFQAK).

The chain is Probable F-box protein At1g14315 from Arabidopsis thaliana (Mouse-ear cress).